The sequence spans 149 residues: Large ribosomal subunit protein bL9 (149 aa).

The protein belongs to the bacterial ribosomal protein bL9 family.

Functionally, binds to the 23S rRNA. This Bacillus velezensis (strain DSM 23117 / BGSC 10A6 / LMG 26770 / FZB42) (Bacillus amyloliquefaciens subsp. plantarum) protein is Large ribosomal subunit protein bL9.